The chain runs to 200 residues: ATP synthase subunit b 1 (200 aa).

Residues 14-34 (AAVIVVVSLMAFCCAGFAVAA) form a helical membrane-spanning segment.

Belongs to the ATPase B chain family. F-type ATPases have 2 components, F(1) - the catalytic core - and F(0) - the membrane proton channel. F(1) has five subunits: alpha(3), beta(3), gamma(1), delta(1), epsilon(1). F(0) has three main subunits: a(1), b(2) and c(10-14). The alpha and beta chains form an alternating ring which encloses part of the gamma chain. F(1) is attached to F(0) by a central stalk formed by the gamma and epsilon chains, while a peripheral stalk is formed by the delta and b chains.

The protein resides in the cell inner membrane. F(1)F(0) ATP synthase produces ATP from ADP in the presence of a proton or sodium gradient. F-type ATPases consist of two structural domains, F(1) containing the extramembraneous catalytic core and F(0) containing the membrane proton channel, linked together by a central stalk and a peripheral stalk. During catalysis, ATP synthesis in the catalytic domain of F(1) is coupled via a rotary mechanism of the central stalk subunits to proton translocation. In terms of biological role, component of the F(0) channel, it forms part of the peripheral stalk, linking F(1) to F(0). The chain is ATP synthase subunit b 1 from Desulfosudis oleivorans (strain DSM 6200 / JCM 39069 / Hxd3) (Desulfococcus oleovorans).